The sequence spans 84 residues: MNYLVMISLALLLMTGVESVRDGYIVDSKNCVYHCVPPCDGLCKKNGAKSGSCGFLIPSGLACWCVALPDNVPIKDPSYKCHSR.

Positions 1–19 (MNYLVMISLALLLMTGVES) are cleaved as a signal peptide. The LCN-type CS-alpha/beta domain maps to 21–82 (RDGYIVDSKN…PIKDPSYKCH (62 aa)). 4 cysteine pairs are disulfide-bonded: C31/C81, C35/C53, C39/C63, and C43/C65. Position 84 (R84) is a propeptide, removed by a carboxypeptidase.

The protein belongs to the long (4 C-C) scorpion toxin superfamily. Sodium channel inhibitor family. Alpha subfamily. In terms of tissue distribution, expressed by the venom gland.

It localises to the secreted. In terms of biological role, alpha toxins bind voltage-independently at site-3 of sodium channels (Nav) and inhibit the inactivation of the activated channels, thereby blocking neuronal transmission. The polypeptide is Alpha-mammal toxin Aah3 (Androctonus australis (Sahara scorpion)).